We begin with the raw amino-acid sequence, 727 residues long: MSGWDEGAVYYSDQPQFPEAGDAATISPHAVLTKFKEFIRNFEIEQNCFPYREALLDNPKRLVVHLEDLLSFDSDLPSLIRSAPADYLPVFEKAAGEVLTGLKMREANEGGVMEEPLTRDVQILLTSREDPVSMRLLGAQYISKLVKISGISIAASRVKAKATYVFLVCKNCKKTREVPCRPGLGGAIVPRSCDNIPQPGEEPCPLDPWMVVPDRSQYVDQQTLKLQENPEDVPTGELPRNMLLSVDRHLVQTIVPGTRLTVMGIYSIFQASSSSNSHKGAVAIRQPYIRVVGLEDTNEASSRGPANFTPDEEEEFKKFADSQDVYKNICTKIAPSIFGHEDVKRAAACLLFGGSRKSLPDGVKLRGDINVLLLGDPSTAKSQFLKFVEKTAPIAVYTSGKGSSAAGLTASVIRDSSTREFYLEGGAMVLADGGVVCIDEFDKMRPEDRVAIHEAMEQQTISIAKAGITTVLNSRTSVLAAANPPSGRYDDLKTAQDNIDLQTTILSRFDLIFIVKDIRKYSQDKEIASHIIRVHASANKFSDENTDSKEDNWLKRYIQYCRARCHPRLSKDAAENLQRKYVTIRMDMKRRAHETGEAAPIPITVRQLEAIVRLSESLAKMRLSHEATPDDVDKAFKLFDTSTMDAARSGINQQINITGEMANEIKQAETQIKRRMGIGARLSERRLIEDLARMGMNDSMVRRALLIMHQRGEVEYQRERRSIVRKA.

Positions 325–531 (VYKNICTKIA…SQDKEIASHI (207 aa)) constitute an MCM domain. 375–382 (GDPSTAKS) contributes to the ATP binding site. The short motif at 507-510 (SRFD) is the Arginine finger element.

Belongs to the MCM family. Component of the minichromosome maintenance (MCM) complex, a heterotetramer composed of MCM2, MCM3, MCM4, MCM5, MCM6 and MCM7. Interacts with EGT1. Expressed in shoot apex and flower buds.

It is found in the nucleus. The protein localises to the cytoplasm. It catalyses the reaction ATP + H2O = ADP + phosphate + H(+). In terms of biological role, probable component of the MCM2-7 complex (MCM complex) that may function as a DNA helicase and which is essential to undergo a single round of replication initiation and elongation per cell cycle in eukaryotic cells. This is DNA replication licensing factor MCM5 (MCM5) from Arabidopsis thaliana (Mouse-ear cress).